A 512-amino-acid chain; its full sequence is Photosystem II CP47 reaction center protein (512 aa).

6 helical membrane passes run 21 to 36 (AVHL…WAGS), 101 to 115 (IVLS…IWHW), 140 to 156 (GIHL…FGAF), 203 to 218 (IAAG…FHLS), 237 to 252 (VLSS…AFVV), and 457 to 472 (TFAL…HGAR).

Belongs to the PsbB/PsbC family. PsbB subfamily. In terms of assembly, PSII is composed of 1 copy each of membrane proteins PsbA, PsbB, PsbC, PsbD, PsbE, PsbF, PsbH, PsbI, PsbJ, PsbK, PsbL, PsbM, PsbT, PsbX, PsbY, PsbZ, Psb30/Ycf12, at least 3 peripheral proteins of the oxygen-evolving complex and a large number of cofactors. It forms dimeric complexes. Requires Binds multiple chlorophylls. PSII binds additional chlorophylls, carotenoids and specific lipids. as cofactor.

It is found in the plastid. Its subcellular location is the chloroplast thylakoid membrane. Functionally, one of the components of the core complex of photosystem II (PSII). It binds chlorophyll and helps catalyze the primary light-induced photochemical processes of PSII. PSII is a light-driven water:plastoquinone oxidoreductase, using light energy to abstract electrons from H(2)O, generating O(2) and a proton gradient subsequently used for ATP formation. The polypeptide is Photosystem II CP47 reaction center protein (Physcomitrium patens (Spreading-leaved earth moss)).